The chain runs to 358 residues: Thiol protease aleurain (358 aa).

The signal sequence occupies residues 1-21 (MSAKTILSSVVLVVLVAASAA). The segment at 22 to 42 (ANIGFDESNPIRMVSDGLREV) is interaction with VSR1. A propeptide spans 22–140 (ANIGFDESNP…KGSHKVTEAA (119 aa)) (activation peptide). Residue Asn-125 is glycosylated (N-linked (GlcNAc...) asparagine). 2 disulfide bridges follow: Cys-162/Cys-205 and Cys-196/Cys-238. The active site involves Cys-165. An N-linked (GlcNAc...) asparagine glycan is attached at Asn-254. Cys-296 and Cys-346 are joined by a disulfide. Residues His-305 and Asn-325 contribute to the active site.

This sequence belongs to the peptidase C1 family. In terms of assembly, interacts with VSR1/BP80B. As to expression, expressed in leaves (at protein level).

It is found in the vacuole. It carries out the reaction Hydrolysis of proteins, acting as an aminopeptidase (notably, cleaving Arg-|-Xaa bonds) as well as an endopeptidase.. Functionally, may play a role in proteolysis leading to mobilization of nitrogen during senescence and starvation. The sequence is that of Thiol protease aleurain from Arabidopsis thaliana (Mouse-ear cress).